The chain runs to 300 residues: Small ribosomal subunit protein uS4m (300 aa).

Positions 146–209 (KRVDMVLLRS…MKRKLLKRLK (64 aa)) constitute an S4 RNA-binding domain.

The protein belongs to the universal ribosomal protein uS4 family.

It is found in the mitochondrion. The polypeptide is Small ribosomal subunit protein uS4m (mrps4) (Dictyostelium discoideum (Social amoeba)).